We begin with the raw amino-acid sequence, 481 residues long: MFS transporter eqxG (481 aa).

Residues 1–13 (MATTDPAIAAPDD) are compositionally biased toward low complexity. Residues 1-58 (MATTDPAIAAPDDSQLEAGRENIRANVGDALEKPSSSTGTMVDEPTDPNVVDWDGPHD) form a disordered region. Asparagine 64 carries N-linked (GlcNAc...) asparagine glycosylation. Residues 72–92 (LHLVIVSLFTLAANLAATMFA) traverse the membrane as a helical segment. Asparagine 106 is a glycosylation site (N-linked (GlcNAc...) asparagine). 10 helical membrane passes run 111 to 131 (AMTV…LAPL), 146 to 166 (FVYV…MFLV), 169 to 189 (IICG…VADL), 201 to 221 (LFTV…TVIF), 276 to 296 (PIVL…FLLF), 315 to 335 (GLAY…FSVL), 353 to 373 (LILM…YGWT), 380 to 400 (WIVP…VVIP), 403 to 423 (IYLV…ANLL), and 439 to 459 (LYVS…CLLF).

The protein belongs to the major facilitator superfamily.

The protein resides in the cell membrane. In terms of biological role, efflux pump that might be required for efficient secretion of equisetin or other secondary metabolies produced by the equisetin gene cluster. The protein is MFS transporter eqxG of Fusarium heterosporum.